A 133-amino-acid polypeptide reads, in one-letter code: Large ribosomal subunit protein bL20 (133 aa).

It belongs to the bacterial ribosomal protein bL20 family.

Binds directly to 23S ribosomal RNA and is necessary for the in vitro assembly process of the 50S ribosomal subunit. It is not involved in the protein synthesizing functions of that subunit. In Bartonella quintana (strain Toulouse) (Rochalimaea quintana), this protein is Large ribosomal subunit protein bL20.